The following is a 317-amino-acid chain: ATP synthase gamma chain (317 aa).

It belongs to the ATPase gamma chain family. As to quaternary structure, F-type ATPases have 2 components, CF(1) - the catalytic core - and CF(0) - the membrane proton channel. CF(1) has five subunits: alpha(3), beta(3), gamma(1), delta(1), epsilon(1). CF(0) has three main subunits: a, b and c.

The protein localises to the cellular thylakoid membrane. Its function is as follows. Produces ATP from ADP in the presence of a proton gradient across the membrane. The gamma chain is believed to be important in regulating ATPase activity and the flow of protons through the CF(0) complex. In Acaryochloris marina (strain MBIC 11017), this protein is ATP synthase gamma chain.